Reading from the N-terminus, the 54-residue chain is Protein hunchback (54 aa).

3 consecutive C2H2-type zinc fingers follow at residues 1 to 3 (RKH), 9 to 31 (FQCD…RKFH), and 37 to 54 (YRCA…SFKL).

It belongs to the hunchback C2H2-type zinc-finger protein family.

It localises to the nucleus. Functionally, gap class segmentation protein that controls development of head structures. The chain is Protein hunchback (hb) from Calliphora vicina (Blue blowfly).